The chain runs to 685 residues: Small ribosomal subunit protein mS39 (685 aa).

The N-terminal 10 residues, 1-10, are a transit peptide targeting the mitochondrion; it reads MAAAAVAARR. Lys127 carries the post-translational modification N6-acetyllysine. 10 PPR repeats span residues 150 to 184, 185 to 220, 254 to 288, 289 to 329, 330 to 366, 367 to 407, 412 to 446, 454 to 488, 489 to 523, and 572 to 606; these read IEDV…GTTV, SLET…ENLE, NARS…RLSA, DVYT…KVKP, NLQT…GIEP, SLAT…TFSP, DGRF…DNRK, RKVY…VFLP, HYQI…SHTF, and PANP…KKIP. Positions 663-685 are disordered; sequence LGNLTELNSSDGESSSDSDSDDK. Positions 676–685 are enriched in acidic residues; the sequence is SSSDSDSDDK.

It belongs to the mitochondrion-specific ribosomal protein mS39 family. As to quaternary structure, component of the mitochondrial ribosome small subunit (28S) which comprises a 12S rRNA and about 30 distinct proteins. Associated with the 12S mitochondrial rRNA (12S mt-rRNA).

It localises to the mitochondrion. In terms of biological role, mitochondrial RNA-binding protein that has a role in mitochondrial translation. The protein is Small ribosomal subunit protein mS39 (Ptcd3) of Mus musculus (Mouse).